The chain runs to 374 residues: Glutamate 5-kinase (374 aa).

Lysine 17 is an ATP binding site. Positions 57, 144, and 156 each coordinate substrate. Residues 176–177 (SD) and 218–224 (TGGMVTK) contribute to the ATP site. Residues 280–358 (QGALVLDDGA…RELARELGPA (79 aa)) enclose the PUA domain.

It belongs to the glutamate 5-kinase family.

It localises to the cytoplasm. It catalyses the reaction L-glutamate + ATP = L-glutamyl 5-phosphate + ADP. The protein operates within amino-acid biosynthesis; L-proline biosynthesis; L-glutamate 5-semialdehyde from L-glutamate: step 1/2. Catalyzes the transfer of a phosphate group to glutamate to form L-glutamate 5-phosphate. The polypeptide is Glutamate 5-kinase (Streptomyces coelicolor (strain ATCC BAA-471 / A3(2) / M145)).